The chain runs to 469 residues: Serine hydroxymethyltransferase, cytosolic (469 aa).

N6-(pyridoxal phosphate)lysine is present on Lys248.

This sequence belongs to the SHMT family. Homotetramer. It depends on pyridoxal 5'-phosphate as a cofactor.

The protein localises to the cytoplasm. The enzyme catalyses (6R)-5,10-methylene-5,6,7,8-tetrahydrofolate + glycine + H2O = (6S)-5,6,7,8-tetrahydrofolate + L-serine. Its pathway is one-carbon metabolism; tetrahydrofolate interconversion. Functionally, interconversion of serine and glycine. This is Serine hydroxymethyltransferase, cytosolic (SHM2) from Candida glabrata (strain ATCC 2001 / BCRC 20586 / JCM 3761 / NBRC 0622 / NRRL Y-65 / CBS 138) (Yeast).